The following is a 172-amino-acid chain: MKLEDYIATIENYPKEGVTFRDISPLMADGNAYSYAIREIVQYATDKKIDMIVGPEARGFIVGCPVAFELGIGFAPVRKPGKLPRKVISVDYEKEYGVDTLCMHADAIKPGQRVLIVDDLLATGGTVKATIEMIERLGGVVAGCAFLIELDGLNGREAIEGYDAKVLMNFPG.

It belongs to the purine/pyrimidine phosphoribosyltransferase family. Homodimer.

The protein resides in the cytoplasm. It carries out the reaction AMP + diphosphate = 5-phospho-alpha-D-ribose 1-diphosphate + adenine. It functions in the pathway purine metabolism; AMP biosynthesis via salvage pathway; AMP from adenine: step 1/1. In terms of biological role, catalyzes a salvage reaction resulting in the formation of AMP, that is energically less costly than de novo synthesis. In Streptococcus thermophilus (strain ATCC BAA-250 / LMG 18311), this protein is Adenine phosphoribosyltransferase.